A 498-amino-acid chain; its full sequence is Putative ABC transporter ATP-binding protein MM_2387 (498 aa).

ABC transporter domains follow at residues 2–242 and 258–490; these read IELR…TSKS and ISIK…VEEK. ATP-binding positions include 36–43 and 290–297; these read GHSAAGKT and GENGSGKT.

This sequence belongs to the ABC transporter superfamily.

The protein resides in the cell membrane. Probably part of an ABC transporter complex. Responsible for energy coupling to the transport system. This is Putative ABC transporter ATP-binding protein MM_2387 from Methanosarcina mazei (strain ATCC BAA-159 / DSM 3647 / Goe1 / Go1 / JCM 11833 / OCM 88) (Methanosarcina frisia).